Consider the following 499-residue polypeptide: 6-hydroxynicotinate reductase (499 aa).

4Fe-4S ferredoxin-type domains lie at 1–29 (MFKI…YEKK) and 31–61 (KGAI…NDAP). [4Fe-4S] cluster is bound by residues Cys-9, Cys-12, Cys-15, Cys-19, Cys-41, Cys-44, Cys-47, and Cys-51.

As to quaternary structure, homotetramer. An oxidized flavin serves as cofactor. [2Fe-2S] cluster is required as a cofactor. Requires [4Fe-4S] cluster as cofactor.

The catalysed reaction is 1,4,5,6-tetrahydro-6-oxonicotinate + oxidized 2[4Fe-4S]-[ferredoxin] = 6-hydroxynicotinate + reduced 2[4Fe-4S]-[ferredoxin] + 2 H(+). Its pathway is cofactor degradation; nicotinate degradation; propanoate and pyruvate from 6-hydroxynicotinate: step 1/8. Functionally, catalyzes the reversible reduction of 6-hydroxynicotinate to 6-oxo-1,4,5,6-tetrahydronicotinate. The polypeptide is 6-hydroxynicotinate reductase (Eubacterium barkeri (Clostridium barkeri)).